A 283-amino-acid polypeptide reads, in one-letter code: Non-selective voltage-gated ion channel 1 (283 aa).

Residues Arg-11 and Lys-19 each contribute to the ATP site. At Ser-109 the chain carries Phosphoserine. Thr-117 carries the phosphothreonine modification.

The protein belongs to the eukaryotic mitochondrial porin family. Homodimer. Interacts with FCJ1. Interacts with AIM5. Interacts.

The protein localises to the mitochondrion outer membrane. Non-selective voltage-gated ion channel that mediates the transport of anions and cations through the mitochondrion outer membrane. The channel adopts an open conformation at low or zero membrane potential and a closed conformation at potentials above 30-40 mV. The open state has a weak anion selectivity whereas the closed state is cation-selective. Is the major permeability factor of the mitochondrial outer membrane. Functionally, catalyzes the scrambling of phospholipids across the outer mitochondrial membrane; the mechanism is unrelated to channel activity and is capable of translocating both anionic and zwitterionic phospholipids. The polypeptide is Non-selective voltage-gated ion channel 1 (POR1) (Saccharomyces cerevisiae (strain ATCC 204508 / S288c) (Baker's yeast)).